Consider the following 342-residue polypeptide: Porphobilinogen deaminase (342 aa).

The residue at position 249 (Cys-249) is an S-(dipyrrolylmethanemethyl)cysteine. The disordered stretch occupies residues 323–342; it reads AAAKQGAAEDGAADSAATGE.

The protein belongs to the HMBS family. In terms of assembly, monomer. It depends on dipyrromethane as a cofactor.

The catalysed reaction is 4 porphobilinogen + H2O = hydroxymethylbilane + 4 NH4(+). The protein operates within porphyrin-containing compound metabolism; protoporphyrin-IX biosynthesis; coproporphyrinogen-III from 5-aminolevulinate: step 2/4. In terms of biological role, tetrapolymerization of the monopyrrole PBG into the hydroxymethylbilane pre-uroporphyrinogen in several discrete steps. The polypeptide is Porphobilinogen deaminase (Paraburkholderia phytofirmans (strain DSM 17436 / LMG 22146 / PsJN) (Burkholderia phytofirmans)).